Consider the following 383-residue polypeptide: 8-amino-7-oxononanoate synthase (383 aa).

Arg21 is a substrate binding site. 108–109 (GF) lines the pyridoxal 5'-phosphate pocket. A substrate-binding site is contributed by His133. Residues Ser179, His207, and Thr233 each contribute to the pyridoxal 5'-phosphate site. Position 236 is an N6-(pyridoxal phosphate)lysine (Lys236). Thr350 contacts substrate.

It belongs to the class-II pyridoxal-phosphate-dependent aminotransferase family. BioF subfamily. As to quaternary structure, homodimer. It depends on pyridoxal 5'-phosphate as a cofactor.

It catalyses the reaction 6-carboxyhexanoyl-[ACP] + L-alanine + H(+) = (8S)-8-amino-7-oxononanoate + holo-[ACP] + CO2. It functions in the pathway cofactor biosynthesis; biotin biosynthesis. Its function is as follows. Catalyzes the decarboxylative condensation of pimeloyl-[acyl-carrier protein] and L-alanine to produce 8-amino-7-oxononanoate (AON), [acyl-carrier protein], and carbon dioxide. The protein is 8-amino-7-oxononanoate synthase of Yersinia enterocolitica serotype O:8 / biotype 1B (strain NCTC 13174 / 8081).